The chain runs to 122 residues: Ribosome-binding factor A (122 aa).

Belongs to the RbfA family. As to quaternary structure, monomer. Binds 30S ribosomal subunits, but not 50S ribosomal subunits or 70S ribosomes.

The protein localises to the cytoplasm. Functionally, one of several proteins that assist in the late maturation steps of the functional core of the 30S ribosomal subunit. Associates with free 30S ribosomal subunits (but not with 30S subunits that are part of 70S ribosomes or polysomes). Required for efficient processing of 16S rRNA. May interact with the 5'-terminal helix region of 16S rRNA. The polypeptide is Ribosome-binding factor A (Opitutus terrae (strain DSM 11246 / JCM 15787 / PB90-1)).